The chain runs to 483 residues: Malonate-semialdehyde dehydrogenase 2 (483 aa).

Positions 152, 176, 179, 180, and 229 each coordinate NAD(+). Cysteine 284 functions as the Nucleophile in the catalytic mechanism. Position 384 (glutamate 384) interacts with NAD(+).

This sequence belongs to the aldehyde dehydrogenase family. IolA subfamily. In terms of assembly, homotetramer.

The enzyme catalyses 3-oxopropanoate + NAD(+) + CoA + H2O = hydrogencarbonate + acetyl-CoA + NADH + H(+). The catalysed reaction is 2-methyl-3-oxopropanoate + NAD(+) + CoA + H2O = propanoyl-CoA + hydrogencarbonate + NADH + H(+). The protein operates within polyol metabolism; myo-inositol degradation into acetyl-CoA; acetyl-CoA from myo-inositol: step 7/7. In terms of biological role, catalyzes the oxidation of malonate semialdehyde (MSA) and methylmalonate semialdehyde (MMSA) into acetyl-CoA and propanoyl-CoA, respectively. Is involved in a myo-inositol catabolic pathway. Bicarbonate, and not CO2, is the end-product of the enzymatic reaction. This chain is Malonate-semialdehyde dehydrogenase 2, found in Geobacillus thermodenitrificans (strain NG80-2).